Here is a 109-residue protein sequence, read N- to C-terminus: Nucleoid-associated protein Bcer98_0019 (109 aa).

Belongs to the YbaB/EbfC family. Homodimer.

It localises to the cytoplasm. The protein localises to the nucleoid. Its function is as follows. Binds to DNA and alters its conformation. May be involved in regulation of gene expression, nucleoid organization and DNA protection. This is Nucleoid-associated protein Bcer98_0019 from Bacillus cytotoxicus (strain DSM 22905 / CIP 110041 / 391-98 / NVH 391-98).